Reading from the N-terminus, the 499-residue chain is Protein-cysteine N-palmitoyltransferase HHAT (499 aa).

Residues 1-5 (MLPGW) are Cytoplasmic-facing. Residues 6–22 (ELTLCLLVSLGFHFRSF) form a helical membrane-spanning segment. Topologically, residues 23 to 67 (YEVYKVSREHEEELDQEFELEMDTLFGGLKKDPTDFEWNFWMEWG) are lumenal. The chain crosses the membrane as a helical span at residues 68–84 (KRRLVWLFIGHMAVSQL). Residues 85–94 (ATLLTKKHRP) lie on the Cytoplasmic side of the membrane. An essential for palmitoylation of SHH region spans residues 91–155 (KHRPWIVMVY…TLRLQSVEEV (65 aa)). The stretch at 95-119 (WIVMVYGMWACWCVLGAPGVVMVLL) is an intramembrane region. The Cytoplasmic portion of the chain corresponds to 120–131 (HSTIAFCVAQFR). The helical transmembrane segment at 132-148 (SVLLSWLCSLLLLSTLR) threads the bilayer. Residues 149 to 162 (LQSVEEVKRRWYKT) lie on the Lumenal side of the membrane. A helical membrane pass occupies residues 163–183 (ENEYYLLQFTLTVRCLYYTSF). Over 184–208 (SLELCRQPPSAQPTPSAQGASHSYP) the chain is Cytoplasmic. Residue C188 is the site of S-palmitoyl cysteine attachment. The stretch at 209 to 223 (WLLTYVFYYPVFHNG) is an intramembrane region. At 224–249 (PILNFPEFFRQMQQPELNSLQHSLCI) the chain is on the cytoplasmic side. A lipid anchor (S-palmitoyl cysteine) is attached at C248. The helical transmembrane segment at 250–277 (VAKGLGRLLCWWWLAELMVHLMYMHALY) threads the bilayer. The Lumenal portion of the chain corresponds to 278-287 (SSAPLLESVS). A helical membrane pass occupies residues 288–316 (CWTLGGLALAQVLFFYVKYLVLFGVPALL). Over 317-369 (MRLDGLTPPPLPRCVSTMFSFTGMWRYFDVGLHNFLIRYVYIPLGGSQHGLLG) the chain is Cytoplasmic. C330 carries S-palmitoyl cysteine lipidation. Residues 370–386 (TLLSTATTFAFVSYWHG) form a helical membrane-spanning segment. H385 is an active-site residue. Over 387-389 (SYE) the chain is Lumenal. Residues 390 to 405 (DLWCWAALNWLGVTVE) form a helical membrane-spanning segment. The Cytoplasmic portion of the chain corresponds to 406 to 433 (SGVRRLLETPCVRETLARHLSPQAHHRL). C416 carries the S-palmitoyl cysteine lipid modification. The chain crosses the membrane as a helical span at residues 434–454 (HALLAACSTSMLILFNLVFLG). A GTP-binding site is contributed by 454-461 (GGIQVGKT). The Lumenal segment spans residues 455 to 468 (GIQVGKTYWNRIFL). Residues 469–487 (QGWPWVTLSVLGFLYCYSH) form a helical membrane-spanning segment. The Cytoplasmic segment spans residues 488–499 (VDIAWAQTYTVL).

It belongs to the membrane-bound acyltransferase family. HHAT subfamily.

Its subcellular location is the endoplasmic reticulum membrane. It localises to the golgi apparatus membrane. The enzyme catalyses N-terminal L-cysteinyl-[protein] + hexadecanoyl-CoA = N-terminal N-hexadecanoyl-L-cysteinyl-[protein] + CoA + H(+). It carries out the reaction N-terminal L-cysteinyl-[protein]-C-terminal glycyl cholesterol ester + hexadecanoyl-CoA = N-terminal N-hexadecanoyl-L-cysteinyl-[protein]-C-terminal glycyl cholesterol ester + CoA + H(+). Functionally, palmitoyl acyltransferase that catalyzes N-terminal palmitoylation of SHH; which is required for SHH signaling during limb development. It also catalyzes N-terminal palmitoylation of DHH. Promotes the transfer of palmitoyl-CoA from the cytoplasmic to the luminal side of the endoplasmic reticulum membrane, where SHH palmitoylation occurs. Plays a role in proper testis cord formation and the differentiation of Leydig cells. The protein is Protein-cysteine N-palmitoyltransferase HHAT (Hhat) of Mus musculus (Mouse).